A 190-amino-acid chain; its full sequence is Potassium-transporting ATPase KdpC subunit (190 aa).

The helical transmembrane segment at 9–29 (VMFILFTIICGGIYPSVVTGI) threads the bilayer.

Belongs to the KdpC family. As to quaternary structure, the system is composed of three essential subunits: KdpA, KdpB and KdpC.

Its subcellular location is the cell inner membrane. In terms of biological role, part of the high-affinity ATP-driven potassium transport (or Kdp) system, which catalyzes the hydrolysis of ATP coupled with the electrogenic transport of potassium into the cytoplasm. This subunit acts as a catalytic chaperone that increases the ATP-binding affinity of the ATP-hydrolyzing subunit KdpB by the formation of a transient KdpB/KdpC/ATP ternary complex. The polypeptide is Potassium-transporting ATPase KdpC subunit (Citrifermentans bemidjiense (strain ATCC BAA-1014 / DSM 16622 / JCM 12645 / Bem) (Geobacter bemidjiensis)).